A 205-amino-acid polypeptide reads, in one-letter code: Cytochrome c biogenesis ATP-binding export protein CcmA 1 (205 aa).

The ABC transporter domain occupies Leu2–Leu205. Position 34 to 41 (Gly34 to Thr41) interacts with ATP.

This sequence belongs to the ABC transporter superfamily. CcmA exporter (TC 3.A.1.107) family. As to quaternary structure, the complex is composed of two ATP-binding proteins (CcmA) and two transmembrane proteins (CcmB).

It is found in the cell inner membrane. It catalyses the reaction heme b(in) + ATP + H2O = heme b(out) + ADP + phosphate + H(+). In terms of biological role, part of the ABC transporter complex CcmAB involved in the biogenesis of c-type cytochromes; once thought to export heme, this seems not to be the case, but its exact role is uncertain. Responsible for energy coupling to the transport system. The sequence is that of Cytochrome c biogenesis ATP-binding export protein CcmA 1 from Salmonella typhimurium (strain LT2 / SGSC1412 / ATCC 700720).